Reading from the N-terminus, the 236-residue chain is ATP synthase subunit a (236 aa).

The next 5 membrane-spanning stretches (helical) occupy residues 18–38 (STVM…FIST), 79–99 (GITL…FSIV), 112–132 (DPTV…FYGV), 174–194 (IYAG…GAVG), and 205–227 (WQGF…TMVY).

It belongs to the ATPase A chain family. As to quaternary structure, F-type ATPases have 2 components, CF(1) - the catalytic core - and CF(0) - the membrane proton channel. CF(1) has five subunits: alpha(3), beta(3), gamma(1), delta(1), epsilon(1). CF(0) has three main subunits: a(1), b(2) and c(9-12). The alpha and beta chains form an alternating ring which encloses part of the gamma chain. CF(1) is attached to CF(0) by a central stalk formed by the gamma and epsilon chains, while a peripheral stalk is formed by the delta and b chains.

Its subcellular location is the cell membrane. Functionally, key component of the proton channel; it plays a direct role in the translocation of protons across the membrane. This is ATP synthase subunit a from Lysinibacillus sphaericus (strain C3-41).